A 712-amino-acid polypeptide reads, in one-letter code: Polyribonucleotide nucleotidyltransferase (712 aa).

Positions 484 and 490 each coordinate Mg(2+). The KH domain maps to 551-610 (PKVFTIQIHPDKIRDIIGPGGKVIRAIQAETGTRVDVDDSGLVKVSAVNLEEGEAALQMI). The 69-residue stretch at 620–688 (GAVYEGTVVK…KDGKIRLSRK (69 aa)) folds into the S1 motif domain. The segment at 689-712 (ALLEEENGKSGPENGAPQRDKNRH) is disordered.

The protein belongs to the polyribonucleotide nucleotidyltransferase family. Mg(2+) is required as a cofactor.

Its subcellular location is the cytoplasm. It carries out the reaction RNA(n+1) + phosphate = RNA(n) + a ribonucleoside 5'-diphosphate. Functionally, involved in mRNA degradation. Catalyzes the phosphorolysis of single-stranded polyribonucleotides processively in the 3'- to 5'-direction. In Desulfatibacillum aliphaticivorans, this protein is Polyribonucleotide nucleotidyltransferase.